The chain runs to 548 residues: Probable thiamine biosynthetic bifunctional enzyme, chloroplastic (548 aa).

Polar residues predominate over residues 1–10 (MAAAPQQSVH). The disordered stretch occupies residues 1-40 (MAAAPQQSVHPSLPSSTSTLRLLISSSPRRPPPPPPRARR). The N-terminal 47 residues, 1-47 (MAAAPQQSVHPSLPSSTSTLRLLISSSPRRPPPPPPRARRYNRLAAS), are a transit peptide targeting the chloroplast. Positions 11–28 (PSLPSSTSTLRLLISSSP) are enriched in low complexity. Residues 372–376 (QLREK) and Asn404 contribute to the 4-amino-2-methyl-5-(diphosphooxymethyl)pyrimidine site. Mg(2+) is bound by residues Asp405 and Asp424. Ser443 serves as a coordination point for 4-amino-2-methyl-5-(diphosphooxymethyl)pyrimidine. 469-471 (TST) is a binding site for 2-[(2R,5Z)-2-carboxy-4-methylthiazol-5(2H)-ylidene]ethyl phosphate. Lys472 provides a ligand contact to 4-amino-2-methyl-5-(diphosphooxymethyl)pyrimidine. Residues Gly499 and 522–523 (VS) contribute to the 2-[(2R,5Z)-2-carboxy-4-methylthiazol-5(2H)-ylidene]ethyl phosphate site.

This sequence belongs to the thiamine-phosphate synthase family. Requires Mg(2+) as cofactor.

The protein localises to the plastid. It is found in the chloroplast. The enzyme catalyses 2-[(2R,5Z)-2-carboxy-4-methylthiazol-5(2H)-ylidene]ethyl phosphate + 4-amino-2-methyl-5-(diphosphooxymethyl)pyrimidine + 2 H(+) = thiamine phosphate + CO2 + diphosphate. It carries out the reaction 2-(2-carboxy-4-methylthiazol-5-yl)ethyl phosphate + 4-amino-2-methyl-5-(diphosphooxymethyl)pyrimidine + 2 H(+) = thiamine phosphate + CO2 + diphosphate. The catalysed reaction is 4-methyl-5-(2-phosphooxyethyl)-thiazole + 4-amino-2-methyl-5-(diphosphooxymethyl)pyrimidine + H(+) = thiamine phosphate + diphosphate. It catalyses the reaction 4-amino-5-hydroxymethyl-2-methylpyrimidine + ATP = 4-amino-2-methyl-5-(phosphooxymethyl)pyrimidine + ADP + H(+). It participates in cofactor biosynthesis; thiamine diphosphate biosynthesis; thiamine phosphate from 4-amino-2-methyl-5-diphosphomethylpyrimidine and 4-methyl-5-(2-phosphoethyl)-thiazole: step 1/1. The protein operates within cofactor biosynthesis; thiamine diphosphate biosynthesis; 4-amino-2-methyl-5-diphosphomethylpyrimidine from 5-amino-1-(5-phospho-D-ribosyl)imidazole: step 2/3. In terms of biological role, essential for thiamine biosynthesis. Bifunctional enzyme that catalyzes the phosphorylation of hydroxymethylpyrimidine phosphate (HMP-P) to HMP-PP and condenses 4-methyl-5-(beta-hydroxyethyl)thiazole monophosphate (THZ-P) and 2-methyl-4-amino-5-hydroxymethyl pyrimidine pyrophosphate (HMP-PP) to form thiamine monophosphate (TMP). The polypeptide is Probable thiamine biosynthetic bifunctional enzyme, chloroplastic (Oryza sativa subsp. japonica (Rice)).